A 503-amino-acid polypeptide reads, in one-letter code: Cytochrome P450 11B2, mitochondrial (503 aa).

Residues 1-24 (MALRAKAEVCVAAPWLSLQRARAL) constitute a mitochondrion transit peptide. Residue phenylalanine 381 participates in 21-hydroxyprogesterone binding. Cysteine 450 is a heme binding site.

This sequence belongs to the cytochrome P450 family. The cofactor is heme. As to expression, expressed sporadically in the zona glomerulosa (zG) of the adrenal cortex (conventional zonation), as well as in aldosterone-producing cell clusters (APCCs) composed of morphological zG cells in contact with the capsule (variegated zonation).

The protein localises to the mitochondrion inner membrane. The enzyme catalyses a steroid + 2 reduced [adrenodoxin] + O2 + 2 H(+) = an 11beta-hydroxysteroid + 2 oxidized [adrenodoxin] + H2O. It catalyses the reaction 21-hydroxyprogesterone + 2 reduced [adrenodoxin] + O2 + 2 H(+) = corticosterone + 2 oxidized [adrenodoxin] + H2O. It carries out the reaction corticosterone + 2 reduced [adrenodoxin] + O2 + 2 H(+) = 18-hydroxycorticosterone + 2 oxidized [adrenodoxin] + H2O. The catalysed reaction is 18-hydroxycorticosterone + 2 reduced [adrenodoxin] + O2 + 2 H(+) = aldosterone + 2 oxidized [adrenodoxin] + 2 H2O. The enzyme catalyses 11-deoxycortisol + 2 reduced [adrenodoxin] + O2 + 2 H(+) = cortisol + 2 oxidized [adrenodoxin] + H2O. It catalyses the reaction 21-hydroxyprogesterone + 2 reduced [adrenodoxin] + O2 + 2 H(+) = 18-hydroxy-11-deoxycorticosterone + 2 oxidized [adrenodoxin] + H2O. It carries out the reaction cortisol + 2 reduced [adrenodoxin] + O2 + 2 H(+) = 18-hydroxycortisol + 2 oxidized [adrenodoxin] + H2O. The catalysed reaction is 18-hydroxycortisol + 2 reduced [adrenodoxin] + O2 + 2 H(+) = 18-oxocortisol + 2 oxidized [adrenodoxin] + 2 H2O. Its pathway is steroid biosynthesis. A cytochrome P450 monooxygenase that catalyzes the biosynthesis of aldosterone, the main mineralocorticoid in the human body responsible for salt and water homeostasis, thus involved in blood pressure regulation, arterial hypertension, and the development of heart failure. Catalyzes three sequential oxidative reactions of 11-deoxycorticosterone (21-hydroxyprogesterone), namely 11-beta hydroxylation, followed by two successive oxidations at C18 yielding 18-hydroxy and then 18-oxo intermediates (that would not leave the enzyme active site during the consecutive hydroxylation reactions), ending with the formation of aldosterone. Can also produce 18-hydroxycortisol and 18-oxocortisol, derived from successive oxidations of cortisol at C18, normally found at very low levels, but significantly increased in primary aldosteronism, the most common form of secondary hypertension. Mechanistically, uses molecular oxygen inserting one oxygen atom into a substrate and reducing the second into a water molecule. Two electrons are provided by NADPH via a two-protein mitochondrial transfer system comprising flavoprotein FDXR (adrenodoxin/ferredoxin reductase) and nonheme iron-sulfur protein FDX1 or FDX2 (adrenodoxin/ferredoxin). Could also be involved in the androgen metabolic pathway. This Homo sapiens (Human) protein is Cytochrome P450 11B2, mitochondrial.